The sequence spans 281 residues: 4-diphosphocytidyl-2-C-methyl-D-erythritol kinase (281 aa).

Residue K11 is part of the active site. 92 to 102 (LVSAGLAGGSA) serves as a coordination point for ATP. D132 is a catalytic residue.

It belongs to the GHMP kinase family. IspE subfamily.

The catalysed reaction is 4-CDP-2-C-methyl-D-erythritol + ATP = 4-CDP-2-C-methyl-D-erythritol 2-phosphate + ADP + H(+). Its pathway is isoprenoid biosynthesis; isopentenyl diphosphate biosynthesis via DXP pathway; isopentenyl diphosphate from 1-deoxy-D-xylulose 5-phosphate: step 3/6. Its function is as follows. Catalyzes the phosphorylation of the position 2 hydroxy group of 4-diphosphocytidyl-2C-methyl-D-erythritol. The sequence is that of 4-diphosphocytidyl-2-C-methyl-D-erythritol kinase from Ehrlichia ruminantium (strain Welgevonden).